Here is a 519-residue protein sequence, read N- to C-terminus: Voltage-gated potassium channel regulatory subunit KCNG4 (519 aa).

Residues 1 to 25 (MPMPSRDGGLHPRHHHYGSHSPWSQ) form a disordered region. Over 1–218 (MPMPSRDGGL…EMVENPQSGL (218 aa)) the chain is Cytoplasmic. Residues 219–240 (PGKVFACLSILFVATTAVSLCV) form a helical membrane-spanning segment. At 241 to 261 (STMPDLRAEEDQGECSRKCYY) the chain is on the extracellular side. The helical transmembrane segment at 262–283 (IFIVETICVAWFSLEFCLRFVQ) threads the bilayer. Over 284–294 (AQDKCQFFQGP) the chain is Cytoplasmic. The chain crosses the membrane as a helical span at residues 295-314 (LNIIDILAISPYYVSLAVSE). At 315–328 (EPPEDGERPSGSSY) the chain is on the extracellular side. The helical; Voltage-sensor transmembrane segment at 329–353 (LEKVGLVLRVLRALRILYVMRLARH) threads the bilayer. The Cytoplasmic portion of the chain corresponds to 354 to 368 (SLGLQTLGLTVRRCT). The helical transmembrane segment at 369–390 (REFGLLLLFLAVAITLFSPLVY) threads the bilayer. Over 391–405 (VAEKESGRVLEFTSI) the chain is Extracellular. Residues 406 to 417 (PASYWWAIISMT) constitute an intramembrane region (helical). The Selectivity filter signature appears at 418–423 (TVGYGD). An intramembrane segment occupies 418–425 (TVGYGDMV). At 426–432 (PRSVPGQ) the chain is on the extracellular side. The helical transmembrane segment at 433–461 (MVALSSILSGILIMAFPATSIFHTFSHSY) threads the bilayer. Residues 462–519 (LELKKEQEQLQARLRHLQNTGPASECELLDPHVASEHELMNDVNDLILEGPALPIMHM) lie on the Cytoplasmic side of the membrane.

This sequence belongs to the potassium channel family. G (TC 1.A.1.2) subfamily. Kv6.4/KCNG4 sub-subfamily. As to quaternary structure, heterotetramer with KCNB1. Does not form homomultimer. As to expression, highly expressed in brain, and at lower levels in liver, small intestine and colon.

Its subcellular location is the cell membrane. Its function is as follows. Regulatory subunit of the voltage-gated potassium (Kv) channel which, when coassembled with KCNB1, modulates the kinetics parameters of the heterotetrameric channel namely the time course of activation, deactivation and inactivation and on the voltage-dependence of activation. Potassium channel subunit that does not form functional channels by itself. Reduces the deactivation rate. Modulates the threshold for activation by shifting by approximately 20 mV in hyperpolarizing direction. Markedly changes the inactivation by shifting the voltage dependence of inactivation by approximately 40 mV in hyperpolarizing direction. Acceleratee activation and enhances the time course of activation. This Homo sapiens (Human) protein is Voltage-gated potassium channel regulatory subunit KCNG4.